The chain runs to 201 residues: Chromophore lyase CpcT/CpeT (201 aa).

The protein belongs to the CpcT/CpeT biliprotein lyase family.

It localises to the plastid. It is found in the organellar chromatophore. Its function is as follows. Covalently attaches a chromophore to Cys residue(s) of phycobiliproteins. The chain is Chromophore lyase CpcT/CpeT from Paulinella chromatophora.